The primary structure comprises 639 residues: Signal recognition particle receptor subunit alpha (639 aa).

The interval 132–317 (APTTMKKFED…STKPSATKGT (186 aa)) is disordered. Basic and acidic residues-rich tracts occupy residues 137–146 (KKFEDSEKAK) and 153–165 (IETR…EKAK). The residue at position 178 (serine 178) is a Phosphoserine. Over residues 204 to 240 (ELSKEEQIRRKREEFIQKHGRGMEKSSKSSKSDAPKE) the composition is skewed to basic and acidic residues. The residue at position 285 (threonine 285) is a Phosphothreonine. 3 positions are modified to phosphoserine: serine 297, serine 298, and serine 299. Positions 305–315 (AQNSTKPSATK) are enriched in polar residues. Positions 420-637 (YVVTFCGVNG…NAKAVVAALM (218 aa)) are NG domain. Residue 426–433 (GVNGVGKS) coordinates GTP. The residue at position 474 (serine 474) is a Phosphoserine. 521–525 (DTAGR) contributes to the GTP binding site. Threonine 579 carries the post-translational modification Phosphothreonine. 589-592 (TKFD) is a GTP binding site.

This sequence belongs to the GTP-binding SRP family. As to quaternary structure, heterodimer with SRPRB. Interacts with the signal recognition particle (SRP) complex subunit SRP54.

The protein resides in the endoplasmic reticulum membrane. Its function is as follows. Component of the SRP (signal recognition particle) receptor. Ensures, in conjunction with the signal recognition particle, the correct targeting of the nascent secretory proteins to the endoplasmic reticulum membrane system. Forms a guanosine 5'-triphosphate (GTP)-dependent complex with the SRP subunit SRP54. SRP receptor compaction and GTPase rearrangement drive SRP-mediated cotranslational protein translocation into the ER. In Bos taurus (Bovine), this protein is Signal recognition particle receptor subunit alpha.